The following is a 609-amino-acid chain: Protein KINESIN LIGHT CHAIN-RELATED 1 (609 aa).

The segment at 1–77 (MPAMPGLVSV…TAAVIDVDDP (77 aa)) is disordered. Low complexity predominate over residues 38–55 (KKTPSSTPSRSKPSPNRS). 10 TPR repeats span residues 140 to 173 (AMSL…PDPT), 183 to 216 (FSGH…QIQT), 225 to 258 (GETC…HRAH), 267 to 301 (AADR…IASG), 307 to 340 (ASID…FKAS), 349 to 382 (ASVF…YNKP), 392 to 425 (AGGL…LEDK), 433 to 466 (AGLE…LRAA), 474 to 507 (GVVL…LEQE), and 516 to 549 (LGVY…REEK). The segment at 582–609 (LQNLIDPNARPPKKESSAKKWPSLGFKF) is disordered.

The protein belongs to the kinesin light chain family. In terms of assembly, interacts with IQD1.

Its subcellular location is the cytoplasm. It is found in the cytoskeleton. The chain is Protein KINESIN LIGHT CHAIN-RELATED 1 from Arabidopsis thaliana (Mouse-ear cress).